The sequence spans 469 residues: Uronate isomerase (469 aa).

It belongs to the metallo-dependent hydrolases superfamily. Uronate isomerase family.

The catalysed reaction is D-glucuronate = D-fructuronate. It catalyses the reaction aldehydo-D-galacturonate = keto-D-tagaturonate. Its pathway is carbohydrate metabolism; pentose and glucuronate interconversion. This is Uronate isomerase from Pectobacterium atrosepticum (strain SCRI 1043 / ATCC BAA-672) (Erwinia carotovora subsp. atroseptica).